The sequence spans 282 residues: Hydroxyacylglutathione hydrolase-like protein (282 aa).

Zn(2+)-binding residues include H54, H56, D58, H59, H110, D134, and H173.

It belongs to the metallo-beta-lactamase superfamily. Glyoxalase II family. Requires Zn(2+) as cofactor.

In terms of biological role, hydrolase acting on ester bonds. In Gallus gallus (Chicken), this protein is Hydroxyacylglutathione hydrolase-like protein (HAGHL).